Reading from the N-terminus, the 54-residue chain is Rubredoxin (54 aa).

A Rubredoxin-like domain is found at 2-52; it reads AKWVCKICGYIYDEDAGDPDNGISPGTKFEELPDDWVCPICGAPKSEFEKL. Fe cation contacts are provided by C6, C9, C39, and C42.

It belongs to the rubredoxin family. Fe(3+) serves as cofactor.

Its function is as follows. Rubredoxin is a small nonheme, iron protein lacking acid-labile sulfide. Its single Fe, chelated to 4 Cys, functions as an electron acceptor and may also stabilize the conformation of the molecule. In Pyrococcus furiosus (strain ATCC 43587 / DSM 3638 / JCM 8422 / Vc1), this protein is Rubredoxin (rub).